The sequence spans 337 residues: Ferrochelatase (337 aa).

Fe cation contacts are provided by His189 and Glu293.

It belongs to the ferrochelatase family.

The protein localises to the cytoplasm. The catalysed reaction is heme b + 2 H(+) = protoporphyrin IX + Fe(2+). It participates in porphyrin-containing compound metabolism; protoheme biosynthesis; protoheme from protoporphyrin-IX: step 1/1. Functionally, catalyzes the ferrous insertion into protoporphyrin IX. This chain is Ferrochelatase, found in Pseudomonas putida (strain W619).